Here is a 382-residue protein sequence, read N- to C-terminus: GDP-mannose transporter (382 aa).

Residues 1–40 are Cytoplasmic-facing; it reads MADDKKTNEYTIEMDKLDHGNKDFEAPAPAVRPRGPPVAQ. The chain crosses the membrane as a helical span at residues 41 to 61; that stretch reads LANNPILPVLAYCGSSILMTV. The Lumenal segment spans residues 62–71; that stretch reads MNKYVLSGRD. A helical transmembrane segment spans residues 72–92; the sequence is FNLNFFLLCVQSIVCIVAIQT. The Cytoplasmic portion of the chain corresponds to 93 to 110; it reads CKVSKLITYRDFNSDEAK. The helical transmembrane segment at 111–127 threads the bilayer; that stretch reads KWFPITLLLIGMIYTGS. Residues 128–134 are Lumenal-facing; it reads KALQYLS. The chain crosses the membrane as a helical span at residues 135-151; that stretch reads IPVYTIFKNLTIILIAY. The Cytoplasmic portion of the chain corresponds to 152-160; sequence GEVLWFGGS. The helical transmembrane segment at 161-182 threads the bilayer; it reads VTGLTLFSFGLMVLSSIIAAWA. Over 183–200 the chain is Lumenal; it reads DIKHAVESSGDATAKVST. A helical transmembrane segment spans residues 201–221; the sequence is LNAGYIWMLINCLCTSSYVLG. Topologically, residues 222 to 233 are cytoplasmic; sequence MRKRIKLTNFKD. The helical transmembrane segment at 234 to 254 threads the bilayer; it reads FDTMFYNNLLSIPVLLVLTFL. The Lumenal segment spans residues 255–274; sequence MEDWSSANIARNFPSTDRNG. Residues 275–295 form a helical membrane-spanning segment; sequence ILFAMILSGLSSVFISYTSAW. Residues 296–303 are Cytoplasmic-facing; that stretch reads CVRVTSST. The helical transmembrane segment at 304 to 324 threads the bilayer; it reads TYSMVGALNKLPIALSGLIFF. The Lumenal portion of the chain corresponds to 325-327; it reads DAP. A helical membrane pass occupies residues 328-348; sequence VTFPSVSAIVVGFISGIVYAV. The Cytoplasmic portion of the chain corresponds to 349-382; sequence AKIKQSAKPKTGVLPMSNPPVSASSQSMRDSLRS. Residues 358-382 form a disordered region; it reads KTGVLPMSNPPVSASSQSMRDSLRS. Over residues 367–382 the composition is skewed to polar residues; it reads PPVSASSQSMRDSLRS.

The protein belongs to the TPT transporter family. SLC35D subfamily. Homooligomer.

It is found in the golgi apparatus membrane. Its subcellular location is the cytoplasmic vesicle membrane. The protein localises to the endoplasmic reticulum membrane. Involved in the import of GDP-mannose from the cytoplasm into the Golgi lumen. This chain is GDP-mannose transporter (gmt1), found in Aspergillus fumigatus (strain CBS 144.89 / FGSC A1163 / CEA10) (Neosartorya fumigata).